Reading from the N-terminus, the 171-residue chain is Probable deoxyuridine 5'-triphosphate nucleotidohydrolase (171 aa).

This sequence belongs to the dCTP deaminase family. Archaeal dUTPase subfamily.

The catalysed reaction is dUTP + H2O = dUMP + diphosphate + H(+). It participates in pyrimidine metabolism; dUMP biosynthesis; dUMP from dCTP (dUTP route): step 2/2. Functionally, this enzyme is involved in nucleotide metabolism: it produces dUMP, the immediate precursor of thymidine nucleotides and it decreases the intracellular concentration of dUTP so that uracil cannot be incorporated into DNA. The chain is Probable deoxyuridine 5'-triphosphate nucleotidohydrolase from Methanosarcina acetivorans (strain ATCC 35395 / DSM 2834 / JCM 12185 / C2A).